The chain runs to 227 residues: uncharacterized protein (227 aa).

The protein to ORF5 in pFZ1.

This is an uncharacterized protein from Methanothermobacter thermautotrophicus (Methanobacterium thermoformicicum).